We begin with the raw amino-acid sequence, 441 residues long: AP-2 complex subunit mu (441 aa).

Residues 174–440 enclose the MHD domain; the sequence is RNELFLDVIE…IGRSGLYETR (267 aa).

This sequence belongs to the adapter complexes medium subunit family. In terms of assembly, adapter protein complex 2 (AP-2) is a heterotetramer composed of two large adaptins (alpha-type subunit and beta-type subunits), a medium adaptin (mu-type subunit AP50) and a small adaptin (sigma-type subunit AP17). As to expression, brain, heart, lung, liver, testis and spleen.

It is found in the cell membrane. Its subcellular location is the membrane. It localises to the coated pit. Functionally, component of the adapter complexes which link clathrin to receptors in coated vesicles. Clathrin-associated protein complexes are believed to interact with the cytoplasmic tails of membrane proteins, leading to their selection and concentration. AP50 is a subunit of the plasma membrane adapter. Essential wnt/egl-20 signaling protein that functions in wnt/egl-20-producing cells. Required for the AP-2 complex-mediated endocytosis of membrane proteins including wntless homolog mig-14 in egl-20-producing cells. During development, regulates the migration of HSN neurons and the left and right Q neuroblasts (QL and QR, respectively) and their descendants, possibly through hox gene and wnt/egl-20 gene target mab-5, and plays a role in establishing ALM and PLM neuronal cell polarity. Regulates AWB sensory neuron cilia membrane expansion during development, potentially via localization of tub-1 and PtdIns(4,5)P2 to the ciliary base. Required for the asymmetric divisions of V5 cells. This Caenorhabditis elegans protein is AP-2 complex subunit mu (dpy-23).